A 201-amino-acid chain; its full sequence is ATP-dependent Clp protease proteolytic subunit (201 aa).

S97 acts as the Nucleophile in catalysis. Residue H122 is part of the active site.

Belongs to the peptidase S14 family. As to quaternary structure, fourteen ClpP subunits assemble into 2 heptameric rings which stack back to back to give a disk-like structure with a central cavity, resembling the structure of eukaryotic proteasomes.

The protein resides in the cytoplasm. It catalyses the reaction Hydrolysis of proteins to small peptides in the presence of ATP and magnesium. alpha-casein is the usual test substrate. In the absence of ATP, only oligopeptides shorter than five residues are hydrolyzed (such as succinyl-Leu-Tyr-|-NHMec, and Leu-Tyr-Leu-|-Tyr-Trp, in which cleavage of the -Tyr-|-Leu- and -Tyr-|-Trp bonds also occurs).. Cleaves peptides in various proteins in a process that requires ATP hydrolysis. Has a chymotrypsin-like activity. Plays a major role in the degradation of misfolded proteins. The chain is ATP-dependent Clp protease proteolytic subunit from Nitratidesulfovibrio vulgaris (strain DSM 19637 / Miyazaki F) (Desulfovibrio vulgaris).